A 331-amino-acid polypeptide reads, in one-letter code: Adenosine deaminase (331 aa).

Zn(2+) contacts are provided by His12 and His14. Residues His14, Asp16, and Gly170 each coordinate substrate. His197 contacts Zn(2+). Glu200 acts as the Proton donor in catalysis. Residue Asp278 coordinates Zn(2+). Asp279 serves as a coordination point for substrate.

It belongs to the metallo-dependent hydrolases superfamily. Adenosine and AMP deaminases family. Adenosine deaminase subfamily. Zn(2+) is required as a cofactor.

The enzyme catalyses adenosine + H2O + H(+) = inosine + NH4(+). It catalyses the reaction 2'-deoxyadenosine + H2O + H(+) = 2'-deoxyinosine + NH4(+). Catalyzes the hydrolytic deamination of adenosine and 2-deoxyadenosine. This chain is Adenosine deaminase, found in Shewanella sp. (strain ANA-3).